A 119-amino-acid chain; its full sequence is Large ribosomal subunit protein uL18 (119 aa).

The protein belongs to the universal ribosomal protein uL18 family. Part of the 50S ribosomal subunit; part of the 5S rRNA/L5/L18/L25 subcomplex. Contacts the 5S and 23S rRNAs.

This is one of the proteins that bind and probably mediate the attachment of the 5S RNA into the large ribosomal subunit, where it forms part of the central protuberance. In Nitrosomonas europaea (strain ATCC 19718 / CIP 103999 / KCTC 2705 / NBRC 14298), this protein is Large ribosomal subunit protein uL18.